A 474-amino-acid chain; its full sequence is tRNA-2-methylthio-N(6)-dimethylallyladenosine synthase (474 aa).

The MTTase N-terminal domain maps to 3 to 120; sequence QKLHIKTWGC…LPEMINQIRG (118 aa). 6 residues coordinate [4Fe-4S] cluster: Cys-12, Cys-49, Cys-83, Cys-157, Cys-161, and Cys-164. The Radical SAM core domain occupies 143–375; that stretch reads KAEGPTAFVS…QQRINNQAAK (233 aa). Residues 378–441 form the TRAM domain; it reads RAMLGTEQRV…TNSLRGDVIR (64 aa).

This sequence belongs to the methylthiotransferase family. MiaB subfamily. Monomer. Requires [4Fe-4S] cluster as cofactor.

It localises to the cytoplasm. It catalyses the reaction N(6)-dimethylallyladenosine(37) in tRNA + (sulfur carrier)-SH + AH2 + 2 S-adenosyl-L-methionine = 2-methylsulfanyl-N(6)-dimethylallyladenosine(37) in tRNA + (sulfur carrier)-H + 5'-deoxyadenosine + L-methionine + A + S-adenosyl-L-homocysteine + 2 H(+). Its function is as follows. Catalyzes the methylthiolation of N6-(dimethylallyl)adenosine (i(6)A), leading to the formation of 2-methylthio-N6-(dimethylallyl)adenosine (ms(2)i(6)A) at position 37 in tRNAs that read codons beginning with uridine. This Actinobacillus succinogenes (strain ATCC 55618 / DSM 22257 / CCUG 43843 / 130Z) protein is tRNA-2-methylthio-N(6)-dimethylallyladenosine synthase.